The chain runs to 644 residues: Transcription factor btd (644 aa).

Disordered regions lie at residues histidine 16–glutamine 65 and alanine 101–proline 196. Low complexity-rich tracts occupy residues alanine 101 to leucine 119 and alanine 140 to proline 196. C2H2-type zinc fingers lie at residues histidine 333–histidine 357, phenylalanine 363–histidine 385, and tyrosine 391–histidine 413. Disordered regions lie at residues leucine 437–threonine 461 and threonine 478–alanine 537. 2 stretches are compositionally biased toward low complexity: residues threonine 499–serine 508 and alanine 521–alanine 537.

The protein resides in the nucleus. In terms of biological role, required for the development of the antennal, intercalary and mandibular segments of the head. This is Transcription factor btd (btd) from Drosophila melanogaster (Fruit fly).